The sequence spans 183 residues: Ribosome-recycling factor (183 aa).

It belongs to the RRF family.

Its subcellular location is the cytoplasm. Its function is as follows. Responsible for the release of ribosomes from messenger RNA at the termination of protein biosynthesis. May increase the efficiency of translation by recycling ribosomes from one round of translation to another. The chain is Ribosome-recycling factor from Deinococcus deserti (strain DSM 17065 / CIP 109153 / LMG 22923 / VCD115).